The primary structure comprises 95 residues: Small ribosomal subunit protein bS6 (95 aa).

Belongs to the bacterial ribosomal protein bS6 family.

Functionally, binds together with bS18 to 16S ribosomal RNA. This is Small ribosomal subunit protein bS6 from Aster yellows witches'-broom phytoplasma (strain AYWB).